The primary structure comprises 500 residues: NAD(P)H-quinone oxidoreductase chain 4, chloroplastic (500 aa).

A run of 14 helical transmembrane segments spans residues 4 to 24 (FPWL…IFFL), 37 to 57 (ISIC…HFQL), 87 to 107 (LGSI…AWPI), 113 to 130 (LFYF…GLFS), 134 to 154 (LLLF…LLSM), 167 to 187 (FILY…GMGL), 211 to 231 (ILLY…IPLH), 242 to 262 (HYST…YGLI), 272 to 292 (AHYL…IYAA), 313 to 333 (MGFI…GAIL), 334 to 354 (QILS…TASD), 386 to 406 (LALP…GLIT), 417 to 437 (LITF…LSML), and 462 to 482 (LFIL…PDFV).

It belongs to the complex I subunit 4 family.

The protein localises to the plastid. It is found in the chloroplast thylakoid membrane. It carries out the reaction a plastoquinone + NADH + (n+1) H(+)(in) = a plastoquinol + NAD(+) + n H(+)(out). The enzyme catalyses a plastoquinone + NADPH + (n+1) H(+)(in) = a plastoquinol + NADP(+) + n H(+)(out). In Triticum aestivum (Wheat), this protein is NAD(P)H-quinone oxidoreductase chain 4, chloroplastic (ndhD).